Reading from the N-terminus, the 1059-residue chain is Carbamoyl phosphate synthase large chain (1059 aa).

Residues 1 to 401 (MPKRQDISKI…AMLKAVRSLE (401 aa)) form a carboxyphosphate synthetic domain region. ATP-binding residues include Arg-129, Arg-169, Gly-175, Gly-176, Arg-208, Ile-210, Glu-215, Gly-241, Ile-242, His-243, Gln-284, and Glu-298. Residues 133 to 327 (KALMERLNEP…IAKMAAKIAV (195 aa)) enclose the ATP-grasp 1 domain. The Mg(2+) site is built by Gln-284, Glu-298, and Asn-300. The Mn(2+) site is built by Gln-284, Glu-298, and Asn-300. The interval 402–546 (IGAIGLDDIT…YATYEQENES (145 aa)) is oligomerization domain. A carbamoyl phosphate synthetic domain region spans residues 547 to 929 (IISTKKSVLV…ALYKAFIASN (383 aa)). The ATP-grasp 2 domain occupies 671 to 861 (DQVIKELALP…LAQLATRVML (191 aa)). 10 residues coordinate ATP: Arg-707, Ser-746, Leu-748, Glu-752, Gly-777, Val-778, His-779, Ser-780, Gln-820, and Glu-832. Mg(2+)-binding residues include Gln-820, Glu-832, and Asn-834. 3 residues coordinate Mn(2+): Gln-820, Glu-832, and Asn-834. An MGS-like domain is found at 930 to 1059 (IKVPRYGNVL…SRSFTVKEMH (130 aa)). The interval 930 to 1059 (IKVPRYGNVL…SRSFTVKEMH (130 aa)) is allosteric domain.

It belongs to the CarB family. Composed of two chains; the small (or glutamine) chain promotes the hydrolysis of glutamine to ammonia, which is used by the large (or ammonia) chain to synthesize carbamoyl phosphate. Tetramer of heterodimers (alpha,beta)4. It depends on Mg(2+) as a cofactor. Mn(2+) serves as cofactor.

The catalysed reaction is hydrogencarbonate + L-glutamine + 2 ATP + H2O = carbamoyl phosphate + L-glutamate + 2 ADP + phosphate + 2 H(+). The enzyme catalyses hydrogencarbonate + NH4(+) + 2 ATP = carbamoyl phosphate + 2 ADP + phosphate + 2 H(+). It participates in amino-acid biosynthesis; L-arginine biosynthesis; carbamoyl phosphate from bicarbonate: step 1/1. The protein operates within pyrimidine metabolism; UMP biosynthesis via de novo pathway; (S)-dihydroorotate from bicarbonate: step 1/3. Functionally, large subunit of the glutamine-dependent carbamoyl phosphate synthetase (CPSase). CPSase catalyzes the formation of carbamoyl phosphate from the ammonia moiety of glutamine, carbonate, and phosphate donated by ATP, constituting the first step of 2 biosynthetic pathways, one leading to arginine and/or urea and the other to pyrimidine nucleotides. The large subunit (synthetase) binds the substrates ammonia (free or transferred from glutamine from the small subunit), hydrogencarbonate and ATP and carries out an ATP-coupled ligase reaction, activating hydrogencarbonate by forming carboxy phosphate which reacts with ammonia to form carbamoyl phosphate. This chain is Carbamoyl phosphate synthase large chain, found in Leuconostoc mesenteroides subsp. mesenteroides (strain ATCC 8293 / DSM 20343 / BCRC 11652 / CCM 1803 / JCM 6124 / NCDO 523 / NBRC 100496 / NCIMB 8023 / NCTC 12954 / NRRL B-1118 / 37Y).